The chain runs to 274 residues: Hydroxyethylthiazole kinase (274 aa).

Met46 serves as a coordination point for substrate. ATP-binding residues include Arg122 and Thr173. Gly200 is a binding site for substrate.

It belongs to the Thz kinase family. Mg(2+) serves as cofactor.

The catalysed reaction is 5-(2-hydroxyethyl)-4-methylthiazole + ATP = 4-methyl-5-(2-phosphooxyethyl)-thiazole + ADP + H(+). The protein operates within cofactor biosynthesis; thiamine diphosphate biosynthesis; 4-methyl-5-(2-phosphoethyl)-thiazole from 5-(2-hydroxyethyl)-4-methylthiazole: step 1/1. Functionally, catalyzes the phosphorylation of the hydroxyl group of 4-methyl-5-beta-hydroxyethylthiazole (THZ). This Clostridium tetani (strain Massachusetts / E88) protein is Hydroxyethylthiazole kinase.